The primary structure comprises 414 residues: Serine hydroxymethyltransferase (414 aa).

Residues Leu-116 and 120–122 each bind (6S)-5,6,7,8-tetrahydrofolate; that span reads GHL. Position 224 is an N6-(pyridoxal phosphate)lysine (Lys-224). 348 to 350 serves as a coordination point for (6S)-5,6,7,8-tetrahydrofolate; that stretch reads SPF.

It belongs to the SHMT family. Homodimer. Pyridoxal 5'-phosphate serves as cofactor.

The protein localises to the cytoplasm. The catalysed reaction is (6R)-5,10-methylene-5,6,7,8-tetrahydrofolate + glycine + H2O = (6S)-5,6,7,8-tetrahydrofolate + L-serine. Its pathway is one-carbon metabolism; tetrahydrofolate interconversion. It participates in amino-acid biosynthesis; glycine biosynthesis; glycine from L-serine: step 1/1. Its function is as follows. Catalyzes the reversible interconversion of serine and glycine with tetrahydrofolate (THF) serving as the one-carbon carrier. This reaction serves as the major source of one-carbon groups required for the biosynthesis of purines, thymidylate, methionine, and other important biomolecules. Also exhibits THF-independent aldolase activity toward beta-hydroxyamino acids, producing glycine and aldehydes, via a retro-aldol mechanism. This is Serine hydroxymethyltransferase from Campylobacter jejuni subsp. doylei (strain ATCC BAA-1458 / RM4099 / 269.97).